Here is a 566-residue protein sequence, read N- to C-terminus: Type 3 secretion system secretin (566 aa).

An N-terminal signal peptide occupies residues 1 to 22; that stretch reads MKKFNIKSLTLLIVLLPLIVNA.

Belongs to the bacterial secretin family. T3SS SctC subfamily. In terms of assembly, the core secretion machinery of the T3SS is composed of approximately 20 different proteins, including cytoplasmic components, a base, an export apparatus and a needle. This subunit is part of the base, which anchors the injectisome in the bacterial cell envelope. Forms a stable homooligomeric complex.

It is found in the cell outer membrane. In terms of biological role, component of the type III secretion system (T3SS), also called injectisome, which is used to inject bacterial effector proteins into eukaryotic host cells. Forms a ring-shaped multimeric structure with an apparent central pore in the outer membrane. This chain is Type 3 secretion system secretin, found in Shigella sonnei.